Consider the following 667-residue polypeptide: YTH domain-containing protein ECT2 (667 aa).

Disordered stretches follow at residues 264–305 (QRPV…PSSV) and 379–398 (NELNRGPRAKGTKNQKGNLD). Residues 267 to 285 (VSGSGVASSYSKSSTVPSS) show a composition bias toward low complexity. Over residues 286-305 (RNQNYRSNSHYTSVHQPSSV) the composition is skewed to polar residues. Residues 442-579 (AMFFIIKSYS…EQGLKIVKIF (138 aa)) enclose the YTH domain. RNA contacts are provided by residues 448–450 (KSY), aspartate 454, 464–465 (WA), asparagine 497, tryptophan 521, tryptophan 526, and tryptophan 534. The disordered stretch occupies residues 606-667 (KAKQTQKQVS…VTGDVVANGC (62 aa)). Over residues 614–627 (VSEEKVTDEKKESA) the composition is skewed to basic and acidic residues. The segment covering 628–639 (TAESASKESPAA) has biased composition (low complexity).

In terms of assembly, interacts (via C-terminus) with CIPK1. Expressed in the shoot apex, at the sites of leaf formation, and in emerging leaves. Highly expressed in rapidly developing tissues.

The protein resides in the cytoplasm. It is found in the nucleus. Its function is as follows. Specifically recognizes and binds N6-methyladenosine (m6A)-containing RNAs, and regulates mRNA stability. M6A is a modification present at internal sites of mRNAs and some non-coding RNAs and plays a role in mRNA stability and processing. Binds preferentially in the 3'UTRs of target genes. May play dual roles in regulating 3'UTR processing in the nucleus and facilitating mRNA stability in the cytoplasm. Required for the correct timing of leaf formation and normal leaf morphology. Functions redundantly with ECT3. Required for proper trichome branching and morphology. Controls trichome morphology by binding transcripts related to trichome morphogenesis and affecting their stability. In Arabidopsis thaliana (Mouse-ear cress), this protein is YTH domain-containing protein ECT2.